Consider the following 901-residue polypeptide: Protein translocase subunit SecA (901 aa).

ATP contacts are provided by residues Q85, 103-107 (GEGKT), and D510. Residues 848 to 901 (RINQNNLPVDENSQTTQNSETEDYSDRRIGRNEPCPCGSGKKYKHCHGSRVARQ) are disordered. Polar residues predominate over residues 849–866 (INQNNLPVDENSQTTQNS). C882, C884, C893, and H894 together coordinate Zn(2+). Basic residues predominate over residues 888-901 (KKYKHCHGSRVARQ).

It belongs to the SecA family. Monomer and homodimer. Part of the essential Sec protein translocation apparatus which comprises SecA, SecYEG and auxiliary proteins SecDF-YajC and YidC. Forms a complex with SecB. Zn(2+) serves as cofactor.

The protein resides in the cell inner membrane. The protein localises to the cytoplasm. The enzyme catalyses ATP + H2O + cellular proteinSide 1 = ADP + phosphate + cellular proteinSide 2.. Part of the Sec protein translocase complex. Interacts with the SecYEG preprotein conducting channel. Has a central role in coupling the hydrolysis of ATP to the transfer of proteins into and across the cell membrane, serving both as a receptor for the preprotein-SecB complex and as an ATP-driven molecular motor driving the stepwise translocation of polypeptide chains across the membrane. The protein is Protein translocase subunit SecA of Haemophilus influenzae (strain ATCC 51907 / DSM 11121 / KW20 / Rd).